The following is a 670-amino-acid chain: Solute carrier organic anion transporter family member 1A6 (670 aa).

The Cytoplasmic portion of the chain corresponds to 1 to 20; sequence MGEPGKRVGIHRVRCFAKIK. Residues 21-40 form a helical membrane-spanning segment; that stretch reads VFLLALIWAYISKILSGVYM. At 41–59 the chain is on the extracellular side; the sequence is STMLTQLERQFNISTSIVG. N-linked (GlcNAc...) asparagine glycosylation is present at N52. A helical transmembrane segment spans residues 60-80; that stretch reads LINGSFEMGNLLVIVFVSYFG. The Cytoplasmic segment spans residues 81–86; the sequence is TKLHRP. A helical membrane pass occupies residues 87 to 111; the sequence is IMIGVGCAVMGLGCFIISLPHFLMG. Topologically, residues 112–155 are extracellular; that stretch reads RYEYETTISPTSNLSSNSFLCVENRSQTLKPTQDPAECVKEIKS. 2 N-linked (GlcNAc...) asparagine glycosylation sites follow: N124 and N135. The helical transmembrane segment at 156–184 threads the bilayer; it reads LMWIYVLVGNIIRGIGETPIMPLGISYIE. Over 185–203 the chain is Cytoplasmic; that stretch reads DFAKSENSPLYIGILEVGK. Residues 204–224 traverse the membrane as a helical segment; the sequence is MIGPILGYLMGPFCANIYVDT. At 225–242 the chain is on the extracellular side; that stretch reads GSVNTDDLTITPTDTRWV. The helical transmembrane segment at 243–267 threads the bilayer; it reads GAWWIGFLVCAGVNVLTSIPFFFFP. Over 268–311 the chain is Cytoplasmic; it reads KTLPKEGLQDNGDGTENAKEEKHRDKAKEENQGIIKEFFLMMKN. Residues 312–333 traverse the membrane as a helical segment; that stretch reads LFCNPIYMLCVLTSVLQVNGVA. Residues 334–353 lie on the Extracellular side of the membrane; sequence NIVIYKPKYLEHHFGISTAK. Residues 354-377 traverse the membrane as a helical segment; it reads AVFLIGLYTTPSVSAGYLISGFIM. Over 378–381 the chain is Cytoplasmic; that stretch reads KKLK. The chain crosses the membrane as a helical span at residues 382–405; sequence ITLKKAAIIALCLFMSECLLSLCN. The Extracellular segment spans residues 406 to 513; sequence FMLTCDTTPI…PDCANKLQYF (108 aa). One can recognise a Kazal-like domain in the interval 433–488; it reads NKFLSDCNTRCNCLTKTWDPVCGNNGLAYMSPCLAGCEKSVGTGANMVFQNCSCIR. 3 cysteine pairs are disulfide-bonded: C439-C469, C445-C465, and C454-C486. N483 and N492 each carry an N-linked (GlcNAc...) asparagine glycan. A helical membrane pass occupies residues 514 to 536; the sequence is LIITVFCCFFYSLATIPGYMVFL. The Cytoplasmic segment spans residues 537–545; that stretch reads RCMKSEEKS. Residues 546 to 571 traverse the membrane as a helical segment; the sequence is LGIGLQAFFMRLFAGIPAPIYFGALI. Residues 572 to 605 lie on the Extracellular side of the membrane; that stretch reads DRTCLHWGTLKCGEPGACRTYEVSSFRRLYLGLP. A helical transmembrane segment spans residues 606 to 623; it reads AALRGSIILPSFFILRLI. Over 624–670 the chain is Cytoplasmic; sequence RKLQIPGDTDSSEIELAETKPTEKESECTDMHKSSKVENDGELKTKL. T632 bears the Phosphothreonine mark. The segment at 633-670 is disordered; that stretch reads DSSEIELAETKPTEKESECTDMHKSSKVENDGELKTKL. Phosphoserine occurs at positions 634 and 635. Basic and acidic residues predominate over residues 640–670; sequence AETKPTEKESECTDMHKSSKVENDGELKTKL.

This sequence belongs to the organo anion transporter (TC 2.A.60) family. Kidney specific.

The protein localises to the cell membrane. Its function is as follows. May mediate the Na(+)-independent transport of organic anions. In Mus musculus (Mouse), this protein is Solute carrier organic anion transporter family member 1A6 (Slco1a6).